We begin with the raw amino-acid sequence, 94 residues long: Pyrimidine/purine nucleoside phosphorylase (94 aa).

This sequence belongs to the nucleoside phosphorylase PpnP family.

It carries out the reaction a purine D-ribonucleoside + phosphate = a purine nucleobase + alpha-D-ribose 1-phosphate. It catalyses the reaction adenosine + phosphate = alpha-D-ribose 1-phosphate + adenine. The enzyme catalyses cytidine + phosphate = cytosine + alpha-D-ribose 1-phosphate. The catalysed reaction is guanosine + phosphate = alpha-D-ribose 1-phosphate + guanine. It carries out the reaction inosine + phosphate = alpha-D-ribose 1-phosphate + hypoxanthine. It catalyses the reaction thymidine + phosphate = 2-deoxy-alpha-D-ribose 1-phosphate + thymine. The enzyme catalyses uridine + phosphate = alpha-D-ribose 1-phosphate + uracil. The catalysed reaction is xanthosine + phosphate = alpha-D-ribose 1-phosphate + xanthine. In terms of biological role, catalyzes the phosphorolysis of diverse nucleosides, yielding D-ribose 1-phosphate and the respective free bases. Can use uridine, adenosine, guanosine, cytidine, thymidine, inosine and xanthosine as substrates. Also catalyzes the reverse reactions. The protein is Pyrimidine/purine nucleoside phosphorylase of Salmonella newport (strain SL254).